The primary structure comprises 266 residues: Nickel import ATP-binding protein NikE (266 aa).

The 249-residue stretch at 4–252 folds into the ABC transporter domain; sequence ISADNIVKIY…RHPASRLLRE (249 aa). 45-52 is an ATP binding site; sequence GRSGCGKS.

This sequence belongs to the ABC transporter superfamily. Nickel importer (TC 3.A.1.5.3) family. The complex is composed of two ATP-binding proteins (NikD and NikE), two transmembrane proteins (NikB and NikC) and a solute-binding protein (NikA).

The protein resides in the cell inner membrane. The enzyme catalyses Ni(2+)(out) + ATP + H2O = Ni(2+)(in) + ADP + phosphate + H(+). Part of the ABC transporter complex NikABCDE involved in nickel import. Responsible for energy coupling to the transport system. This is Nickel import ATP-binding protein NikE from Brucella abortus (strain 2308).